The primary structure comprises 63 residues: Large ribosomal subunit protein bL28A (63 aa).

This sequence belongs to the bacterial ribosomal protein bL28 family.

The protein is Large ribosomal subunit protein bL28A of Nocardia farcinica (strain IFM 10152).